Reading from the N-terminus, the 118-residue chain is MGDKELMWALKNGDLDEVKNILVKAEDVNRTLEGGRKPLHYAADCGQAEMLEFLLSKGADVNAPDKHGITPLLSATYEGHVTCVKILLEKGADKNRKGPDGLSAFEAAESEAIKALLE.

ANK repeat units lie at residues 1-30 (MGDKELMWALKNGDLDEVKNILVKAEDVNR), 34-65 (GGRKPLHYAADCGQAEMLEFLLSKGADVNAPD), and 67-98 (HGITPLLSATYEGHVTCVKILLEKGADKNRKG).

The protein belongs to the myotrophin family.

It is found in the cytoplasm. The protein resides in the nucleus. The protein localises to the perinuclear region. Its function is as follows. Regulates NF-kappa-B transcription factor activity. Promotes growth of cardiomyocytes, but not cardiomyocyte proliferation. Promotes cardiac muscle hypertrophy. Plays a role in the regulation of the growth of actin filaments. Inhibits the activity of the F-actin-capping protein complex. In Danio rerio (Zebrafish), this protein is Myotrophin (mtpn).